Reading from the N-terminus, the 224-residue chain is Uracil-DNA glycosylase 2 (224 aa).

Aspartate 64 functions as the Proton acceptor in the catalytic mechanism.

Belongs to the uracil-DNA glycosylase (UDG) superfamily. UNG family.

The protein localises to the cytoplasm. The catalysed reaction is Hydrolyzes single-stranded DNA or mismatched double-stranded DNA and polynucleotides, releasing free uracil.. In terms of biological role, excises uracil residues from the DNA which can arise as a result of misincorporation of dUMP residues by DNA polymerase or due to deamination of cytosine. In Listeria monocytogenes serotype 4b (strain F2365), this protein is Uracil-DNA glycosylase 2.